The chain runs to 264 residues: ECF RNA polymerase sigma factor BldN (264 aa).

The not required for transcription in vitro stretch occupies residues 1–87; the sequence is MYPHVGVDAS…PAADSDSARM (87 aa). A disordered region spans residues 64–83; it reads RSSSSGAAATTHRRPAADSD. A sigma-70 factor domain-2 region spans residues 105–172; that stretch reads LYDQYSDTVY…LVADHFKSSR (68 aa). A Polymerase core binding motif is present at residues 129–132; the sequence is DLTS. The interval 204–255 is sigma-70 factor domain-4; it reads ALLDAVRRLNPQQQECVTLRFLQGLSVAETARVMGKNEGAIKTLQYRAVRTL.

The protein belongs to the sigma-70 factor family. ECF subfamily. In terms of processing, two forms of protein exist; a 35 kDa form in early growth and a 28 kDa form seen in later stages (at protein level). In liquid culture the larger form accumulates to higher level than on solid media. The shorter form results from processing just upstream of Met-87; the exact position is unknown. There are 4 possible start codons; mutation of the first prevents protein production while mutation of the other 3 (Val-44, Met-87 and Met-88) permits production of both forms. Introduction of stop codons between the first and second, or second and third possible start codons also prevents protein production, corroborating that the annotated start codon is the correct one.

Its function is as follows. Sigma factors are initiation factors that promote the attachment of RNA polymerase to specific initiation sites and are then released. Extracytoplasmic function (ECF) sigma factors are usually held in an inactive form by an anti-sigma factor until released. ECF sigma factor involved in aerial mycelium formation, required for translation from the bldMp1 promoter. Expressed as a preprotein; processing and accumulation of the mature protein starts as aerial mycelium formation and sporulation commence. Activates expression of about 17 genes, including those for rdlA and most of the chaplins (chpA to chpH); chaplin activation is indirect. The protein is ECF RNA polymerase sigma factor BldN of Streptomyces coelicolor (strain ATCC BAA-471 / A3(2) / M145).